The following is a 202-amino-acid chain: uncharacterized protein (202 aa).

The HTH tetR-type domain maps to 13 to 73 (ELAADRILDA…AYVHRETRRL (61 aa)). A DNA-binding region (H-T-H motif) is located at residues 36–55 (GMNEIAKAAGCSRATLYRYF).

This is an uncharacterized protein from Mycobacterium tuberculosis (strain CDC 1551 / Oshkosh).